A 128-amino-acid polypeptide reads, in one-letter code: Arginine decarboxylase proenzyme (128 aa).

Ser-76 functions as the Schiff-base intermediate with substrate; via pyruvic acid in the catalytic mechanism. The residue at position 76 (Ser-76) is a Pyruvic acid (Ser); by autocatalysis. The active-site Proton acceptor; for processing activity is His-81. Cys-96 (proton donor; for catalytic activity) is an active-site residue.

It belongs to the prokaryotic AdoMetDC family. Type 1 subfamily. In terms of assembly, heterooctamer of four alpha and four beta chains arranged as a tetramer of alpha/beta heterodimers. The cofactor is pyruvate. In terms of processing, is synthesized initially as an inactive proenzyme. Formation of the active enzyme involves a self-maturation process in which the active site pyruvoyl group is generated from an internal serine residue via an autocatalytic post-translational modification. Two non-identical subunits are generated from the proenzyme in this reaction, and the pyruvate is formed at the N-terminus of the alpha chain, which is derived from the carboxyl end of the proenzyme. The post-translation cleavage follows an unusual pathway, termed non-hydrolytic serinolysis, in which the side chain hydroxyl group of the serine supplies its oxygen atom to form the C-terminus of the beta chain, while the remainder of the serine residue undergoes an oxidative deamination to produce ammonia and the pyruvoyl group blocking the N-terminus of the alpha chain.

It carries out the reaction L-arginine + H(+) = agmatine + CO2. It participates in amine and polyamine biosynthesis; agmatine biosynthesis; agmatine from L-arginine: step 1/1. Functionally, specifically catalyzes the decarboxylation of L-arginine to agmatine. Has no S-adenosylmethionine decarboxylase (AdoMetDC) activity. This is Arginine decarboxylase proenzyme from Metallosphaera sedula (strain ATCC 51363 / DSM 5348 / JCM 9185 / NBRC 15509 / TH2).